The following is a 547-amino-acid chain: Phosphomethylpyrimidine synthase (547 aa).

Residues Asn146, Met175, Tyr204, His240, 260-262, 301-304, and Glu340 contribute to the substrate site; these read SRG and DGLR. A Zn(2+)-binding site is contributed by His344. Tyr367 contacts substrate. Residue His408 coordinates Zn(2+). [4Fe-4S] cluster contacts are provided by Cys488, Cys491, and Cys496.

It belongs to the ThiC family. The cofactor is [4Fe-4S] cluster.

It carries out the reaction 5-amino-1-(5-phospho-beta-D-ribosyl)imidazole + S-adenosyl-L-methionine = 4-amino-2-methyl-5-(phosphooxymethyl)pyrimidine + CO + 5'-deoxyadenosine + formate + L-methionine + 3 H(+). The protein operates within cofactor biosynthesis; thiamine diphosphate biosynthesis. In terms of biological role, catalyzes the synthesis of the hydroxymethylpyrimidine phosphate (HMP-P) moiety of thiamine from aminoimidazole ribotide (AIR) in a radical S-adenosyl-L-methionine (SAM)-dependent reaction. This chain is Phosphomethylpyrimidine synthase, found in Mycobacterium bovis (strain ATCC BAA-935 / AF2122/97).